A 371-amino-acid chain; its full sequence is 4-hydroxy-3-methylbut-2-en-1-yl diphosphate synthase (flavodoxin) (371 aa).

The [4Fe-4S] cluster site is built by Cys268, Cys271, Cys303, and Glu310.

The protein belongs to the IspG family. The cofactor is [4Fe-4S] cluster.

It carries out the reaction (2E)-4-hydroxy-3-methylbut-2-enyl diphosphate + oxidized [flavodoxin] + H2O + 2 H(+) = 2-C-methyl-D-erythritol 2,4-cyclic diphosphate + reduced [flavodoxin]. Its pathway is isoprenoid biosynthesis; isopentenyl diphosphate biosynthesis via DXP pathway; isopentenyl diphosphate from 1-deoxy-D-xylulose 5-phosphate: step 5/6. In terms of biological role, converts 2C-methyl-D-erythritol 2,4-cyclodiphosphate (ME-2,4cPP) into 1-hydroxy-2-methyl-2-(E)-butenyl 4-diphosphate. This is 4-hydroxy-3-methylbut-2-en-1-yl diphosphate synthase (flavodoxin) from Lysinibacillus sphaericus (strain C3-41).